The sequence spans 108 residues: Replication restart protein PriB (108 aa).

The 101-residue stretch at 8–108 folds into the SSB domain; it reads IDNSFSVMGV…LHAEQIEFID (101 aa).

Belongs to the PriB family. As to quaternary structure, homodimer. Interacts with PriA and DnaT. Component of the replication restart primosome. Primosome assembly occurs via a 'hand-off' mechanism. PriA binds to replication forks, subsequently PriB then DnaT bind; DnaT then displaces ssDNA to generate the helicase loading substrate.

Functionally, involved in the restart of stalled replication forks, which reloads the replicative helicase on sites other than the origin of replication; the PriA-PriB pathway is the major replication restart pathway. During primosome assembly it facilitates complex formation between PriA and DnaT on DNA; stabilizes PriA on DNA. Stimulates the DNA unwinding activity of PriA helicase. The protein is Replication restart protein PriB of Haemophilus influenzae (strain ATCC 51907 / DSM 11121 / KW20 / Rd).